The following is a 194-amino-acid chain: Probable nicotinate-nucleotide adenylyltransferase (194 aa).

The protein belongs to the NadD family.

The enzyme catalyses nicotinate beta-D-ribonucleotide + ATP + H(+) = deamido-NAD(+) + diphosphate. It functions in the pathway cofactor biosynthesis; NAD(+) biosynthesis; deamido-NAD(+) from nicotinate D-ribonucleotide: step 1/1. In terms of biological role, catalyzes the reversible adenylation of nicotinate mononucleotide (NaMN) to nicotinic acid adenine dinucleotide (NaAD). This Christiangramia forsetii (strain DSM 17595 / CGMCC 1.15422 / KT0803) (Gramella forsetii) protein is Probable nicotinate-nucleotide adenylyltransferase.